Consider the following 175-residue polypeptide: Enhancer of mRNA-decapping protein 1 (175 aa).

A compositionally biased stretch (polar residues) spans 1-27 (MSTDTMYFNSSRLLPSAGRNKTNNLIK). Disordered regions lie at residues 1–113 (MSTD…KDDT) and 155–175 (GSTFATNGPREAKNLPKPSFL). N-acetylserine is present on Ser-2. Over residues 35 to 47 (ARGNAAKNANNNN) the composition is skewed to low complexity. A compositionally biased stretch (polar residues) spans 58–77 (LPNGQKPNFGHSSNKKPSFN). Ser-82 is subject to Phosphoserine. The segment covering 100-113 (NNKETPRQNNKDDT) has biased composition (basic and acidic residues).

It belongs to the EDC family.

The protein localises to the cytoplasm. Functionally, mRNA-binding protein which stimulates mRNA decapping by DCP1 and DCP2. Involved in the regulation of expression of multiple genes involved in glycolysis and gluconeogenesis. The sequence is that of Enhancer of mRNA-decapping protein 1 (EDC1) from Saccharomyces cerevisiae (strain ATCC 204508 / S288c) (Baker's yeast).